The primary structure comprises 542 residues: NXPE family member 4 (542 aa).

The N-terminal stretch at 1 to 26 (MKMMASRKSLWVLLFIVIFWISFTVF) is a signal peptide. N-linked (GlcNAc...) asparagine glycans are attached at residues N91, N92, N159, and N223.

Belongs to the NXPE family.

The protein resides in the secreted. The sequence is that of NXPE family member 4 (Nxpe4) from Rattus norvegicus (Rat).